Reading from the N-terminus, the 306-residue chain is Ornithine carbamoyltransferase (306 aa).

Carbamoyl phosphate is bound by residues 53–56 (STRT), Gln-80, Arg-104, and 131–134 (HPCQ). Residues Asn-162, Asp-220, and 224–225 (SM) each bind L-ornithine. Residues 260-261 (CL) and Arg-288 each bind carbamoyl phosphate.

Belongs to the aspartate/ornithine carbamoyltransferase superfamily. OTCase family.

It localises to the cytoplasm. It catalyses the reaction carbamoyl phosphate + L-ornithine = L-citrulline + phosphate + H(+). The protein operates within amino-acid biosynthesis; L-arginine biosynthesis; L-arginine from L-ornithine and carbamoyl phosphate: step 1/3. In terms of biological role, reversibly catalyzes the transfer of the carbamoyl group from carbamoyl phosphate (CP) to the N(epsilon) atom of ornithine (ORN) to produce L-citrulline. This chain is Ornithine carbamoyltransferase, found in Methylobacillus flagellatus (strain ATCC 51484 / DSM 6875 / VKM B-1610 / KT).